The following is a 350-amino-acid chain: Ferredoxin--NADP reductase (350 aa).

Thr22, Glu41, Gln49, Tyr54, Val94, Phe129, Asp295, and Ser336 together coordinate FAD.

Belongs to the ferredoxin--NADP reductase type 2 family. In terms of assembly, homodimer. FAD serves as cofactor.

It catalyses the reaction 2 reduced [2Fe-2S]-[ferredoxin] + NADP(+) + H(+) = 2 oxidized [2Fe-2S]-[ferredoxin] + NADPH. The protein is Ferredoxin--NADP reductase of Chlorobium luteolum (strain DSM 273 / BCRC 81028 / 2530) (Pelodictyon luteolum).